A 510-amino-acid chain; its full sequence is NAD(P)H-quinone oxidoreductase subunit 2 B, chloroplastic (510 aa).

13 consecutive transmembrane segments (helical) span residues 24 to 44, 57 to 77, 99 to 119, 124 to 144, 149 to 169, 183 to 203, 227 to 247, 295 to 315, 323 to 343, 354 to 374, 395 to 415, 428 to 448, and 484 to 504; these read LLLF…GLIL, IPWF…ALLF, IFQF…VEYI, MAIT…MFLC, LITI…LSGY, YLLM…WLYG, PGIL…LSLA, WHLL…LIAI, MLAY…IVGD, YMLF…LFGL, ALSL…AGFF, GLYF…YYYL, and MIVC…IIAI.

The protein belongs to the complex I subunit 2 family. As to quaternary structure, NDH is composed of at least 16 different subunits, 5 of which are encoded in the nucleus.

The protein localises to the plastid. The protein resides in the chloroplast thylakoid membrane. The catalysed reaction is a plastoquinone + NADH + (n+1) H(+)(in) = a plastoquinol + NAD(+) + n H(+)(out). It catalyses the reaction a plastoquinone + NADPH + (n+1) H(+)(in) = a plastoquinol + NADP(+) + n H(+)(out). NDH shuttles electrons from NAD(P)H:plastoquinone, via FMN and iron-sulfur (Fe-S) centers, to quinones in the photosynthetic chain and possibly in a chloroplast respiratory chain. The immediate electron acceptor for the enzyme in this species is believed to be plastoquinone. Couples the redox reaction to proton translocation, and thus conserves the redox energy in a proton gradient. The chain is NAD(P)H-quinone oxidoreductase subunit 2 B, chloroplastic from Eucalyptus globulus subsp. globulus (Tasmanian blue gum).